Here is a 424-residue protein sequence, read N- to C-terminus: Fasciclin-like arabinogalactan protein 1 (424 aa).

The first 24 residues, 1 to 24 (MAKKMSSLIIIFNILLLLTTQTHA), serve as a signal peptide directing secretion. 2 FAS1 domains span residues 25–170 (HNVT…SRVL) and 184–323 (EMNL…DKVL). Asparagine 26, asparagine 128, asparagine 160, asparagine 186, and asparagine 240 each carry an N-linked (GlcNAc...) asparagine glycan. A disordered region spans residues 338–393 (APAPAPEDGDVADSPKAAKGKAKGKKKKAAPSPDNDPFGDSDSPAEGPDGEADDAT). Residues 355 to 366 (AKGKAKGKKKKA) show a composition bias toward basic residues. The GPI-anchor amidated aspartate moiety is linked to residue aspartate 396. The propeptide at 397–424 (AGAVRIIGGAKAGLVVSLLCLFASSWLL) is removed in mature form.

The protein belongs to the fasciclin-like AGP family. Preferentially expressed in flowers.

The protein localises to the secreted. Its subcellular location is the extracellular space. The protein resides in the apoplast. It localises to the cell membrane. In terms of biological role, may be a cell surface adhesion protein. This chain is Fasciclin-like arabinogalactan protein 1 (FLA1), found in Arabidopsis thaliana (Mouse-ear cress).